A 594-amino-acid chain; its full sequence is Elongation factor 4 (594 aa).

One can recognise a tr-type G domain in the interval 2–184 (KNIRNFSIIA…TIVAKVPAPE (183 aa)). GTP is bound by residues 14-19 (DHGKST) and 131-134 (NKID).

It belongs to the TRAFAC class translation factor GTPase superfamily. Classic translation factor GTPase family. LepA subfamily.

The protein localises to the cell inner membrane. It catalyses the reaction GTP + H2O = GDP + phosphate + H(+). In terms of biological role, required for accurate and efficient protein synthesis under certain stress conditions. May act as a fidelity factor of the translation reaction, by catalyzing a one-codon backward translocation of tRNAs on improperly translocated ribosomes. Back-translocation proceeds from a post-translocation (POST) complex to a pre-translocation (PRE) complex, thus giving elongation factor G a second chance to translocate the tRNAs correctly. Binds to ribosomes in a GTP-dependent manner. In Francisella tularensis subsp. holarctica (strain FTNF002-00 / FTA), this protein is Elongation factor 4.